We begin with the raw amino-acid sequence, 133 residues long: Snaclec echicetin subunit alpha (133 aa).

Disulfide bonds link cysteine 4-cysteine 15, cysteine 31-cysteine 127, and cysteine 102-cysteine 119. The C-type lectin domain maps to 11–128 (YEGHCYQLFR…CEFKFPFVCK (118 aa)).

Belongs to the snaclec family. Heterodimer of subunits alpha and beta; disulfide-linked. Forms an active complex with the pentameric immunoglobuline Mkappa (IgMkappa). As to expression, expressed by the venom gland.

Its subcellular location is the secreted. In terms of biological role, echicetin itself inhibits aggregation of washed platelets induced by vWF, thrombin or alboaggregin-A. However, when complexed with the pentameric plasma immunoglobulin Mkappa (IgMkappa), echicetin binds specifically to GPIb and activates platelets. This is caused by P-selectin expression and activation of alpha-IIb/beta-3 as well as tyrosine phosphorylation of several signal transduction molecules, including p53/56(LYN), p64, p72(SYK), p70 to p90, and p120. In vivo, it induces thrombocytopenia when injected into mice, probably accounting of activation of platelets rather than inhibition. In Echis carinatus sochureki (Saw-scaled viper), this protein is Snaclec echicetin subunit alpha.